The chain runs to 816 residues: Fibroblast growth factor receptor 1 (816 aa).

The N-terminal stretch at 1–23 (MLSWRHLVFWAMLVMATLSAARP) is a signal peptide. At 24–374 (APTLPEQVSP…VIMTSPLYLE (351 aa)) the chain is on the extracellular side. The Ig-like C2-type 1 domain occupies 25-118 (PTLPEQVSPK…ETTFFAVNVS (94 aa)). A disulfide bridge links C54 with C100. N76 and N116 each carry an N-linked (GlcNAc...) asparagine glycan. The disordered stretch occupies residues 118–152 (SDRIPSVEDDDDDDEKSSSEEKEAENSKPNPVAPF). A compositionally biased stretch (basic and acidic residues) spans 133–143 (KSSSEEKEAEN). 2 Ig-like C2-type domains span residues 156-244 (PEKM…YQLD) and 253-355 (PILQ…AWLT). A disulfide bridge links C176 with C228. N-linked (GlcNAc...) asparagine glycans are attached at residues N238, N262, N294, N315, and N328. C275 and C339 form a disulfide bridge. The helical transmembrane segment at 375–395 (IIIYCTGAFLISCMLVTVIIY) threads the bilayer. The Cytoplasmic segment spans residues 396–816 (KMKNTTKKTD…QHANGGLKKR (421 aa)). Y459 is modified (phosphotyrosine; by autocatalysis). The Protein kinase domain occupies 474–763 (LILGKPLGEG…VAMTSNQEYL (290 aa)). ATP contacts are provided by residues 480–486 (LGEGCFG), K510, 558–560 (EYA), and N564. 2 positions are modified to phosphotyrosine; by autocatalysis: Y579 and Y581. Catalysis depends on D619, which acts as the Proton acceptor. ATP is bound by residues R623 and D637. Phosphotyrosine; by autocatalysis occurs at positions 649, 650, 726, and 762. Positions 776–816 (FPDTRSSTCSSGEDSVFSHDPLPDEPCLPKYQHANGGLKKR) are disordered. Polar residues predominate over residues 779–788 (TRSSTCSSGE).

It belongs to the protein kinase superfamily. Tyr protein kinase family. Fibroblast growth factor receptor subfamily. As to quaternary structure, monomer. Homodimer after ligand binding. Post-translationally, autophosphorylated. Binding of FGF family members together with heparan sulfate proteoglycan or heparin promotes receptor dimerization and autophosphorylation on tyrosine residues. Autophosphorylation occurs in trans between the two FGFR molecules present in the dimer and proceeds in a highly ordered manner. Phosphotyrosine residues provide docking sites for interacting proteins and so are crucial for FGFR1 function and its regulation. Ubiquitinated. FGFR1 is rapidly ubiquitinated after autophosphorylation, leading to internalization and degradation. In terms of processing, N-glycosylated in the endoplasmic reticulum. The N-glycan chains undergo further maturation to an Endo H-resistant form in the Golgi apparatus.

It is found in the cell membrane. The protein localises to the nucleus. Its subcellular location is the cytoplasm. The protein resides in the cytosol. It localises to the cytoplasmic vesicle. It catalyses the reaction L-tyrosyl-[protein] + ATP = O-phospho-L-tyrosyl-[protein] + ADP + H(+). With respect to regulation, present in an inactive conformation in the absence of bound ligand. Ligand binding leads to dimerization and activation by sequential autophosphorylation on tyrosine residues. Its function is as follows. Tyrosine-protein kinase that acts as a cell-surface receptor for fibroblast growth factors and plays an essential role in the regulation of embryonic development, cell proliferation, differentiation and migration. Required for normal mesoderm patterning and normal skeletogenesis. Phosphorylates PLCG1, FRS2, GAB1 and SHB. Ligand binding leads to the activation of several signaling cascades. Activation of PLCG1 leads to the production of the cellular signaling molecules diacylglycerol and inositol-1,4,5-trisphosphate. Phosphorylation of FRS2 triggers recruitment of GRB2, GAB1, PIK3R1 and SOS1, and mediates activation of RAS, MAPK1/ERK2, MAPK3/ERK1 and the MAP kinase signaling pathway, as well as of the AKT1 signaling pathway. Promotes phosphorylation of SHC1, STAT1 and PTPN11/SHP2. In the nucleus, enhances RPS6KA1 and CREB1 activity and contributes to the regulation of transcription. FGFR1 signaling is down-regulated by ubiquitination, internalization and degradation. The protein is Fibroblast growth factor receptor 1 (FGFR1) of Pleurodeles waltl (Iberian ribbed newt).